The following is a 388-amino-acid chain: Probable proton-coupled zinc antiporter SLC30A3 (388 aa).

Residues 1-42 (MEPSPASGGSETTRLVSPRDRSSAGGGLRLKSLFTEPSEPLP) form a disordered region. At 1–75 (MEPSPASGGS…SPERAQARRQ (75 aa)) the chain is on the cytoplasmic side. 2 positions are modified to phosphoserine: Ser-63 and Ser-66. A helical membrane pass occupies residues 76–96 (LYAACVVCFIFMAGEVVGGYL). Over 97-105 (AHSLAIMTD) the chain is Lumenal. Residues 106 to 126 (AAHLLADIGSMMASLFSLWLS) form a helical membrane-spanning segment. Zn(2+) is bound by residues His-108 and Asp-112. At 127 to 145 (TRPATRTMTFGWHRSETLG) the chain is on the cytoplasmic side. Residues 146-166 (ALASVVSLWIVTGILLYLAFL) traverse the membrane as a helical segment. Topologically, residues 167–177 (RLLHSDYHIEA) are lumenal. A helical transmembrane segment spans residues 178–198 (GAMLLTASIAVCANMIMAFVL). The Cytoplasmic portion of the chain corresponds to 199 to 235 (HQTGAPHSHGPRGAEYAPLEEGHGHPLSLGNTSVRAA). A helical membrane pass occupies residues 236-256 (FVHVLGDLLQSLGVLAASILI). Zn(2+) contacts are provided by His-238 and Asp-242. The Lumenal segment spans residues 257–263 (YFKPQYK). A helical membrane pass occupies residues 264 to 284 (VADPISTFLFSICALGSTAPT). Residues 285–388 (LRDVLLVLME…CLRCREPPKA (104 aa)) are Cytoplasmic-facing.

The protein belongs to the cation diffusion facilitator (CDF) transporter (TC 2.A.4) family. SLC30A subfamily. Homodimer. Homodimerization could regulate efficiency of zinc transport. Interacts with TMEM163.

It is found in the cytoplasmic vesicle. It localises to the secretory vesicle. The protein localises to the synaptic vesicle membrane. The protein resides in the synapse. Its subcellular location is the synaptosome. It is found in the late endosome membrane. It localises to the lysosome membrane. The catalysed reaction is Zn(2+)(in) + 2 H(+)(out) = Zn(2+)(out) + 2 H(+)(in). In terms of biological role, probable proton-coupled zinc ion antiporter mediating the import of zinc from cytoplasm into synaptic vesicles and participating to cellular zinc ion homeostasis in the brain. This is Probable proton-coupled zinc antiporter SLC30A3 from Rattus norvegicus (Rat).